Here is an 84-residue protein sequence, read N- to C-terminus: Three-finger toxin MALT0070C (84 aa).

Positions 1–21 are cleaved as a signal peptide; it reads MKTLLLTLVVVTIVCLDLGYT. 4 disulfide bridges follow: Cys-24-Cys-43, Cys-36-Cys-60, Cys-64-Cys-71, and Cys-72-Cys-77.

It belongs to the three-finger toxin family. Short-chain subfamily. Expressed by the venom gland.

The protein resides in the secreted. In Micrurus altirostris (Uruguayan coral snake), this protein is Three-finger toxin MALT0070C.